Consider the following 479-residue polypeptide: Oxysterol-binding protein homolog C23B6.01c (479 aa).

Residues serine 328, serine 408, serine 409, and serine 421 each carry the phosphoserine modification. Positions 404–418 are enriched in basic and acidic residues; the sequence is KPEDSSIHKHSRDAS. The interval 404-479 is disordered; the sequence is KPEDSSIHKH…KLHEEQDPAL (76 aa). Residues 439-452 show a composition bias toward polar residues; the sequence is QSTASFVTYRSDNG. Positions 470–479 are enriched in basic and acidic residues; sequence KLHEEQDPAL.

This sequence belongs to the OSBP family.

It localises to the cytoplasm. Its subcellular location is the nucleus. This Schizosaccharomyces pombe (strain 972 / ATCC 24843) (Fission yeast) protein is Oxysterol-binding protein homolog C23B6.01c.